Here is a 207-residue protein sequence, read N- to C-terminus: Peptidyl-tRNA hydrolase (207 aa).

Tyr14 is a tRNA binding site. His19 (proton acceptor) is an active-site residue. 3 residues coordinate tRNA: Phe68, Asn70, and Asn116.

Belongs to the PTH family. Monomer.

It localises to the cytoplasm. It catalyses the reaction an N-acyl-L-alpha-aminoacyl-tRNA + H2O = an N-acyl-L-amino acid + a tRNA + H(+). Functionally, hydrolyzes ribosome-free peptidyl-tRNAs (with 1 or more amino acids incorporated), which drop off the ribosome during protein synthesis, or as a result of ribosome stalling. In terms of biological role, catalyzes the release of premature peptidyl moieties from peptidyl-tRNA molecules trapped in stalled 50S ribosomal subunits, and thus maintains levels of free tRNAs and 50S ribosomes. This chain is Peptidyl-tRNA hydrolase, found in Hyphomonas neptunium (strain ATCC 15444).